A 102-amino-acid chain; its full sequence is COX assembly mitochondrial protein 2 homolog (102 aa).

One can recognise a CHCH domain in the interval threonine 11–arginine 55. 2 consecutive short sequence motifs (cx9C motif) follow at residues cysteine 14 to cysteine 24 and cysteine 37 to cysteine 47. Intrachain disulfides connect cysteine 14–cysteine 47 and cysteine 24–cysteine 37.

Belongs to the CMC family.

Its subcellular location is the mitochondrion. In terms of biological role, may be involved in cytochrome c oxidase biogenesis. In Caenorhabditis elegans, this protein is COX assembly mitochondrial protein 2 homolog.